Here is a 635-residue protein sequence, read N- to C-terminus: Threonine--tRNA ligase (635 aa).

Residues 1-61 (MIKITLKDGK…HKDSSLEILT (61 aa)) enclose the TGS domain. Positions 242–532 (DHRKLGKELD…LIEQYAGAFP (291 aa)) are catalytic. Zn(2+) contacts are provided by C333, H384, and H509.

This sequence belongs to the class-II aminoacyl-tRNA synthetase family. In terms of assembly, homodimer. Requires Zn(2+) as cofactor.

The protein resides in the cytoplasm. The enzyme catalyses tRNA(Thr) + L-threonine + ATP = L-threonyl-tRNA(Thr) + AMP + diphosphate + H(+). In terms of biological role, catalyzes the attachment of threonine to tRNA(Thr) in a two-step reaction: L-threonine is first activated by ATP to form Thr-AMP and then transferred to the acceptor end of tRNA(Thr). Also edits incorrectly charged L-seryl-tRNA(Thr). This is Threonine--tRNA ligase from Clostridium botulinum (strain 657 / Type Ba4).